A 225-amino-acid polypeptide reads, in one-letter code: Biosynthetic peptidoglycan transglycosylase (225 aa).

Residues 8-28 traverse the membrane as a helical segment; it reads VLLIFIGAILFIQLWIFSSLV.

The protein belongs to the glycosyltransferase 51 family.

Its subcellular location is the cell inner membrane. It carries out the reaction [GlcNAc-(1-&gt;4)-Mur2Ac(oyl-L-Ala-gamma-D-Glu-L-Lys-D-Ala-D-Ala)](n)-di-trans,octa-cis-undecaprenyl diphosphate + beta-D-GlcNAc-(1-&gt;4)-Mur2Ac(oyl-L-Ala-gamma-D-Glu-L-Lys-D-Ala-D-Ala)-di-trans,octa-cis-undecaprenyl diphosphate = [GlcNAc-(1-&gt;4)-Mur2Ac(oyl-L-Ala-gamma-D-Glu-L-Lys-D-Ala-D-Ala)](n+1)-di-trans,octa-cis-undecaprenyl diphosphate + di-trans,octa-cis-undecaprenyl diphosphate + H(+). The protein operates within cell wall biogenesis; peptidoglycan biosynthesis. Its function is as follows. Peptidoglycan polymerase that catalyzes glycan chain elongation from lipid-linked precursors. This is Biosynthetic peptidoglycan transglycosylase from Acinetobacter baumannii (strain ATCC 17978 / DSM 105126 / CIP 53.77 / LMG 1025 / NCDC KC755 / 5377).